Here is a 463-residue protein sequence, read N- to C-terminus: D-inositol 3-phosphate glycosyltransferase (463 aa).

Histidine 40 is a 1D-myo-inositol 3-phosphate binding site. UDP-N-acetyl-alpha-D-glucosamine-binding positions include 46-47 (QP) and glycine 54. 1D-myo-inositol 3-phosphate contacts are provided by residues 51–56 (DAGGMN), lysine 109, tyrosine 142, threonine 166, and arginine 186. 3 residues coordinate UDP-N-acetyl-alpha-D-glucosamine: arginine 260, lysine 265, and glutamine 318. 3 residues coordinate Mg(2+): phenylalanine 327, histidine 328, and valine 330. UDP-N-acetyl-alpha-D-glucosamine is bound by residues glutamate 340 and glutamate 348. Threonine 354 is a binding site for Mg(2+). Residues 443 to 463 (VRDPVAARKPRRWTARRGVGA) are disordered.

It belongs to the glycosyltransferase group 1 family. MshA subfamily. Homodimer.

The catalysed reaction is 1D-myo-inositol 3-phosphate + UDP-N-acetyl-alpha-D-glucosamine = 1D-myo-inositol 2-acetamido-2-deoxy-alpha-D-glucopyranoside 3-phosphate + UDP + H(+). Its function is as follows. Catalyzes the transfer of a N-acetyl-glucosamine moiety to 1D-myo-inositol 3-phosphate to produce 1D-myo-inositol 2-acetamido-2-deoxy-glucopyranoside 3-phosphate in the mycothiol biosynthesis pathway. The chain is D-inositol 3-phosphate glycosyltransferase from Mycobacterium ulcerans (strain Agy99).